Here is a 100-residue protein sequence, read N- to C-terminus: Small ribosomal subunit protein uS14c (100 aa).

The protein belongs to the universal ribosomal protein uS14 family. Part of the 30S ribosomal subunit.

Its subcellular location is the plastid. The protein localises to the chloroplast. Functionally, binds 16S rRNA, required for the assembly of 30S particles. This chain is Small ribosomal subunit protein uS14c, found in Ostreococcus tauri.